We begin with the raw amino-acid sequence, 545 residues long: Ribulokinase (545 aa).

Belongs to the ribulokinase family.

It catalyses the reaction D-ribulose + ATP = D-ribulose 5-phosphate + ADP + H(+). The catalysed reaction is L-ribulose + ATP = L-ribulose 5-phosphate + ADP + H(+). The protein operates within carbohydrate degradation; L-arabinose degradation via L-ribulose; D-xylulose 5-phosphate from L-arabinose (bacterial route): step 2/3. In Staphylococcus aureus (strain USA300), this protein is Ribulokinase.